Here is a 150-residue protein sequence, read N- to C-terminus: MRVVIQRVTEASVSIRGALHSRIGQGVLILVGIEDRDGESDIELLTSKISNLRIFDDSEGVMNLSVKDINGEALVVSQFTLMGSTRKGNRPSYIKASRPEIAIPLYESFCNSLSAKLGKAVRQGVFGADMQVALVNDGPVTILIDTHNKE.

The Gly-cisPro motif, important for rejection of L-amino acids signature appears at 138–139 (GP).

It belongs to the DTD family. In terms of assembly, homodimer.

The protein localises to the cytoplasm. It catalyses the reaction glycyl-tRNA(Ala) + H2O = tRNA(Ala) + glycine + H(+). The enzyme catalyses a D-aminoacyl-tRNA + H2O = a tRNA + a D-alpha-amino acid + H(+). An aminoacyl-tRNA editing enzyme that deacylates mischarged D-aminoacyl-tRNAs. Also deacylates mischarged glycyl-tRNA(Ala), protecting cells against glycine mischarging by AlaRS. Acts via tRNA-based rather than protein-based catalysis; rejects L-amino acids rather than detecting D-amino acids in the active site. By recycling D-aminoacyl-tRNA to D-amino acids and free tRNA molecules, this enzyme counteracts the toxicity associated with the formation of D-aminoacyl-tRNA entities in vivo and helps enforce protein L-homochirality. This is D-aminoacyl-tRNA deacylase from Porphyromonas gingivalis (strain ATCC 33277 / DSM 20709 / CIP 103683 / JCM 12257 / NCTC 11834 / 2561).